Reading from the N-terminus, the 139-residue chain is D-ribose pyranase (139 aa).

The Proton donor role is filled by H20. Substrate-binding positions include D28, H106, and 128 to 130 (YAN).

Belongs to the RbsD / FucU family. RbsD subfamily. Homodecamer.

The protein localises to the cytoplasm. It catalyses the reaction beta-D-ribopyranose = beta-D-ribofuranose. Its pathway is carbohydrate metabolism; D-ribose degradation; D-ribose 5-phosphate from beta-D-ribopyranose: step 1/2. In terms of biological role, catalyzes the interconversion of beta-pyran and beta-furan forms of D-ribose. The protein is D-ribose pyranase of Escherichia coli O45:K1 (strain S88 / ExPEC).